The sequence spans 316 residues: Secreted effector protein SifB (316 aa).

It belongs to the Sif family.

The protein resides in the secreted. The protein localises to the host cytoplasm. Effector proteins function to alter host cell physiology and promote bacterial survival in host tissues. In Salmonella typhimurium (strain LT2 / SGSC1412 / ATCC 700720), this protein is Secreted effector protein SifB (sifB).